We begin with the raw amino-acid sequence, 578 residues long: Phosphoenolpyruvate-protein phosphotransferase (578 aa).

His-195 functions as the Tele-phosphohistidine intermediate in the catalytic mechanism. 2 residues coordinate phosphoenolpyruvate: Arg-302 and Arg-338. 2 residues coordinate Mg(2+): Glu-437 and Asp-461. Phosphoenolpyruvate is bound by residues 460–461 (ND) and Arg-471. The Proton donor role is filled by Cys-508.

Belongs to the PEP-utilizing enzyme family. Homodimer. Requires Mg(2+) as cofactor.

It is found in the cytoplasm. It carries out the reaction L-histidyl-[protein] + phosphoenolpyruvate = N(pros)-phospho-L-histidyl-[protein] + pyruvate. General (non sugar-specific) component of the phosphoenolpyruvate-dependent sugar phosphotransferase system (sugar PTS). This major carbohydrate active-transport system catalyzes the phosphorylation of incoming sugar substrates concomitantly with their translocation across the cell membrane. Enzyme I transfers the phosphoryl group from phosphoenolpyruvate (PEP) to the phosphoryl carrier protein (HPr). This is Phosphoenolpyruvate-protein phosphotransferase (ptsI) from Bacillus sp. (strain S).